The chain runs to 172 residues: Mesogenin-1 (172 aa).

The tract at residues 1 to 69 (METLHHPLVK…SPYSSSSHTQ (69 aa)) is disordered. Residues 18–29 (SSDSEPNSSCMA) are compositionally biased toward polar residues. Residues 42–66 (SLSQTPSPQSLSPAVSYESPYSSSS) are compositionally biased toward low complexity. A bHLH domain is found at 108–162 (QRRRKASEREKLRMRAIAEALHTLRNNLPPMYSQGRQPLTKIQTLKCTINYISEL).

Its subcellular location is the nucleus. Its function is as follows. Involved in specifying the paraxial, but not dorsal, mesoderm. May regulate the expression of T-box transcription factors required for mesoderm formation and differentiation, such as brachyury T, wnt8, vegt and eomes. This Xenopus tropicalis (Western clawed frog) protein is Mesogenin-1 (msgn1).